A 189-amino-acid chain; its full sequence is Receptor activity-modifying protein 2 (189 aa).

The first 44 residues, 1 to 44 (MAPLRVERAPGGSRLGVTRAQRPTALCLPPLLLLLLLLLGAVSA), serve as a signal peptide directing secretion. Residues 45-157 (SPESLNQSLP…VQPTFSDPPE (113 aa)) are Extracellular-facing. The segment covering 49-61 (LNQSLPESQNQSH) has biased composition (polar residues). The tract at residues 49 to 69 (LNQSLPESQNQSHPTEDSLVS) is disordered. 4 N-linked (GlcNAc...) asparagine glycosylation sites follow: Asn-50, Asn-58, Asn-99, and Asn-144. 2 disulfide bridges follow: Cys-83/Cys-113 and Cys-98/Cys-145. A helical transmembrane segment spans residues 158–179 (DVLLAMIIAPICLIPFLVTLVV). Residues 180-189 (WRSKDSDAQA) lie on the Cytoplasmic side of the membrane.

It belongs to the RAMP family. In terms of assembly, heterodimer of CALCRL and RAMP2; the interaction forms the receptor complex for adrenomedullin/ADM. Heterodimer of CALCR and RAMP2; interaction forms the AMYR2 receptor complex for calcitonin/CALC and amylin/IAPP. As to expression, ubiquitous. Expressed predominantly in embryonic brain, lung and gut and in adult heart, lung, skeletal muscle and brain.

It is found in the cell membrane. Accessory protein that interacts with and modulates the function of G-protein coupled receptors including calcitonin gene-related peptide type 1 receptor (CALCRL) and calcitonin receptor (CALCR). Required for the transport of CALCRL to the plasma membrane. Together with CALCRL, form a receptor complex for adrenomedullin/ADM. Together with CALCR, act as a receptor complex for calcitonin/CT/CALC. Together with CALCR, also act as a receptor complex for amylin/IAPP. This is Receptor activity-modifying protein 2 from Mus musculus (Mouse).